We begin with the raw amino-acid sequence, 269 residues long: Protein LNK3 (269 aa).

In terms of assembly, interacts with REV8.

Its function is as follows. Probable transcriptional coactivator. The protein is Protein LNK3 of Arabidopsis thaliana (Mouse-ear cress).